The sequence spans 34 residues: U1-poneritoxin-Na2a (34 aa).

As to expression, expressed by the venom gland.

The protein resides in the secreted. Its function is as follows. May have antimicrobial properties, like most ant linear peptides. The sequence is that of U1-poneritoxin-Na2a from Neoponera apicalis (Ant).